The chain runs to 426 residues: Glutamate-1-semialdehyde 2,1-aminomutase (426 aa).

Position 265 is an N6-(pyridoxal phosphate)lysine (lysine 265).

This sequence belongs to the class-III pyridoxal-phosphate-dependent aminotransferase family. HemL subfamily. As to quaternary structure, homodimer. Pyridoxal 5'-phosphate is required as a cofactor.

It localises to the cytoplasm. It catalyses the reaction (S)-4-amino-5-oxopentanoate = 5-aminolevulinate. It functions in the pathway porphyrin-containing compound metabolism; protoporphyrin-IX biosynthesis; 5-aminolevulinate from L-glutamyl-tRNA(Glu): step 2/2. In Yersinia enterocolitica serotype O:8 / biotype 1B (strain NCTC 13174 / 8081), this protein is Glutamate-1-semialdehyde 2,1-aminomutase.